The chain runs to 1060 residues: FACT complex subunit SPT16 (1060 aa).

Positions 458–490 (FNDDNETQKENNNNNNKRPGLSQTSNTTALKLE) are disordered. Residues 478 to 490 (LSQTSNTTALKLE) are compositionally biased toward polar residues. Residues 508-532 (NADDANSEKLRQEIQIKLHEKRLQE) adopt a coiled-coil conformation. Residues 977–1060 (QGESDEEEES…AKADRNSGFD (84 aa)) form a disordered region. Composition is skewed to acidic residues over residues 979–990 (ESDEEEESDEES) and 997–1044 (EDPQ…EDWD). Residues 1045-1060 (ALERKAAKADRNSGFD) show a composition bias toward basic and acidic residues.

This sequence belongs to the peptidase M24 family. SPT16 subfamily. Forms a stable heterodimer with POB3. The SPT16-POB3 dimer weakly associates with multiple molecules of NHP6 to form the FACT complex.

It localises to the nucleus. It is found in the chromosome. Its function is as follows. Component of the FACT complex, a general chromatin factor that acts to reorganize nucleosomes. The FACT complex is involved in multiple processes that require DNA as a template such as mRNA elongation, DNA replication and DNA repair. During transcription elongation the FACT complex acts as a histone chaperone that both destabilizes and restores nucleosomal structure. It facilitates the passage of RNA polymerase II and transcription by promoting the dissociation of one histone H2A-H2B dimer from the nucleosome, then subsequently promotes the reestablishment of the nucleosome following the passage of RNA polymerase II. This is FACT complex subunit SPT16 (CDC68) from Candida albicans (strain SC5314 / ATCC MYA-2876) (Yeast).